Reading from the N-terminus, the 96-residue chain is RNA-binding protein Hfq (96 aa).

The region spanning 9 to 68 (DPYLNALRRERIPVSIYLVNGIKLQGQIESFDQFVILLKNTVNQMVYKHAISTVVPARSV) is the Sm domain. The interval 67-96 (SVSHHNNSNNSNQQNYQQEQQTDSNVEKAE) is disordered. The span at 72 to 87 (NNSNNSNQQNYQQEQQ) shows a compositional bias: low complexity.

It belongs to the Hfq family. In terms of assembly, homohexamer.

Functionally, RNA chaperone that binds small regulatory RNA (sRNAs) and mRNAs to facilitate mRNA translational regulation in response to envelope stress, environmental stress and changes in metabolite concentrations. Also binds with high specificity to tRNAs. In Pasteurella multocida (strain Pm70), this protein is RNA-binding protein Hfq.